We begin with the raw amino-acid sequence, 74 residues long: Protein F9 homolog (74 aa).

The Virion surface segment spans residues glycine 1 to proline 34. Residues tryptophan 35–leucine 55 form a helical membrane-spanning segment. Topologically, residues arginine 56–arginine 73 are intravirion.

Belongs to the chordopoxvirinae L1 protein family.

It localises to the virion membrane. This is Protein F9 homolog from Capra hircus (Goat).